Consider the following 764-residue polypeptide: FAST kinase domain-containing protein 5, mitochondrial (764 aa).

Residue Ser-95 is modified to Phosphoserine. At Lys-507 the chain carries N6-acetyllysine. One can recognise an RAP domain in the interval 697–757; the sequence is LAIQFTNRNQ…RLEKLAFLHE (61 aa).

This sequence belongs to the FAST kinase family. As to quaternary structure, found in a complex with GRSF1, DDX28, DHX30 and FASTKD2. Associates with the 12S mitochondrial rRNA (12S mt-rRNA).

The protein localises to the mitochondrion matrix. It localises to the mitochondrion nucleoid. In terms of biological role, plays an important role in the processing of non-canonical mitochondrial mRNA precursors. This Macaca fascicularis (Crab-eating macaque) protein is FAST kinase domain-containing protein 5, mitochondrial (FASTKD5).